The primary structure comprises 342 residues: Tetraacyldisaccharide 4'-kinase (342 aa).

68 to 75 (TVGGTGKT) is a binding site for ATP.

This sequence belongs to the LpxK family.

It catalyses the reaction a lipid A disaccharide + ATP = a lipid IVA + ADP + H(+). The protein operates within glycolipid biosynthesis; lipid IV(A) biosynthesis; lipid IV(A) from (3R)-3-hydroxytetradecanoyl-[acyl-carrier-protein] and UDP-N-acetyl-alpha-D-glucosamine: step 6/6. Functionally, transfers the gamma-phosphate of ATP to the 4'-position of a tetraacyldisaccharide 1-phosphate intermediate (termed DS-1-P) to form tetraacyldisaccharide 1,4'-bis-phosphate (lipid IVA). This chain is Tetraacyldisaccharide 4'-kinase, found in Burkholderia cenocepacia (strain HI2424).